The primary structure comprises 78 residues: Probable [Fe-S]-dependent transcriptional repressor (78 aa).

Iron-sulfur cluster is bound by residues Cys-56, Cys-61, Cys-64, and Cys-70.

Belongs to the FeoC family.

In terms of biological role, may function as a transcriptional regulator that controls feoABC expression. This Escherichia fergusonii (strain ATCC 35469 / DSM 13698 / CCUG 18766 / IAM 14443 / JCM 21226 / LMG 7866 / NBRC 102419 / NCTC 12128 / CDC 0568-73) protein is Probable [Fe-S]-dependent transcriptional repressor.